The following is a 198-amino-acid chain: Prolactin (198 aa).

Intrachain disulfides connect Cys-4/Cys-11, Cys-58/Cys-173, and Cys-190/Cys-198.

This sequence belongs to the somatotropin/prolactin family. In terms of tissue distribution, pituitary gland.

The protein localises to the secreted. The sequence is that of Prolactin from Chelonia mydas (Green sea-turtle).